We begin with the raw amino-acid sequence, 152 residues long: Small ribosomal subunit protein uS13 (152 aa).

A disordered region spans residues 133–152; the sequence is GQHTKTTGRRGRTVGVSKKK.

It belongs to the universal ribosomal protein uS13 family.

Its subcellular location is the cytoplasm. Its function is as follows. Located at the top of the head of the 40S subunit, it contacts several helices of the 18S rRNA. The protein is Small ribosomal subunit protein uS13 (RpS18) of Spodoptera frugiperda (Fall armyworm).